The sequence spans 61 residues: MARTALKVKAKRKPKFKVREYNRCPICGRPRAFLRKYGICRICFREKALAGELPGVRKASW.

Cysteine 24, cysteine 27, cysteine 40, and cysteine 43 together coordinate Zn(2+).

It belongs to the universal ribosomal protein uS14 family. Zinc-binding uS14 subfamily. Part of the 30S ribosomal subunit. Contacts proteins S3 and S10. Requires Zn(2+) as cofactor.

Binds 16S rRNA, required for the assembly of 30S particles and may also be responsible for determining the conformation of the 16S rRNA at the A site. In Maridesulfovibrio salexigens (strain ATCC 14822 / DSM 2638 / NCIMB 8403 / VKM B-1763) (Desulfovibrio salexigens), this protein is Small ribosomal subunit protein uS14.